A 455-amino-acid chain; its full sequence is MIQLDPTLLLSWRAGQHPDAPMHNDQRYMTGFGNEFASEAVADTLPVGQNSPQRVAHGLYAEQLSGTAFTAPRGENRRSWLYRMRPAAVHGTFSLIEQSQFHNDFGHGPVPPDQLRWSPLPLPQTPTDFIDGLYTMAGNGSPEAMNGVAVHLYAANASMQDRFFYNADGELLLVPQLGRLRVHTELGMLELEPQQIGVIPRGVRFRVELRDGTARGYVCENFGGLLHLPDLGPIGSNGLANPRDFETPCAAFEQREGRFELVAKFQGHLWRADIGHSPLDVVAWHGNYAPYRYDLRRFNTIGSISFDHPDPSIFTVLTSPSDTHGTANMDFAIFPPRWLVAQHTFRPPWFHRNVASEFMGLVHGVYDAKADGFAPGGASLHNCMSGHGPDAATFDKASQADLSRPDVITETMAFMFETRAVLRPTAQALHAPHRQGDYQQCWAGLRKAFQAPPAS.

H308 serves as the catalytic Proton acceptor. H351 and E357 together coordinate Fe cation. Residues Y366 and H387 each coordinate homogentisate. Residue H387 coordinates Fe cation.

It belongs to the homogentisate dioxygenase family. Hexamer; dimer of trimers. It depends on Fe cation as a cofactor.

The enzyme catalyses homogentisate + O2 = 4-maleylacetoacetate + H(+). The protein operates within amino-acid degradation; L-phenylalanine degradation; acetoacetate and fumarate from L-phenylalanine: step 4/6. Its function is as follows. Involved in the catabolism of homogentisate (2,5-dihydroxyphenylacetate or 2,5-OH-PhAc), a central intermediate in the degradation of phenylalanine and tyrosine. Catalyzes the oxidative ring cleavage of the aromatic ring of homogentisate to yield maleylacetoacetate. The chain is Homogentisate 1,2-dioxygenase from Xanthomonas campestris pv. campestris (strain 8004).